The chain runs to 255 residues: Small ribosomal subunit protein uS2 (255 aa).

The disordered stretch occupies residues Arg231–Ala255. Over residues Ala236–Ala255 the composition is skewed to acidic residues.

Belongs to the universal ribosomal protein uS2 family.

This Citrifermentans bemidjiense (strain ATCC BAA-1014 / DSM 16622 / JCM 12645 / Bem) (Geobacter bemidjiensis) protein is Small ribosomal subunit protein uS2.